Consider the following 419-residue polypeptide: Creatine kinase S-type, mitochondrial (419 aa).

The transit peptide at 1–39 (MASTFSKLLTGRNASLLFATLGTSALTTGYLVNRQKVCA) directs the protein to the mitochondrion. The interval 40 to 64 (EARDQHKLFPPSADYPDLRKHNNCM) is cardiolipin-binding. The 87-residue stretch at 46–132 (KLFPPSADYP…FDPVIKLRHN (87 aa)) folds into the Phosphagen kinase N-terminal domain. The Phosphagen kinase C-terminal domain occupies 159–401 (YVLSSRVRTG…NYLVDCEKKL (243 aa)). ATP is bound by residues 162 to 166 (SSRVR) and His-225. A Phosphotyrosine modification is found at Tyr-255. Residues Arg-270, Arg-326, 354–359 (RGTGGV), and Asp-369 contribute to the ATP site. Thr-356 is subject to Phosphothreonine.

The protein belongs to the ATP:guanido phosphotransferase family. As to quaternary structure, exists as an octamer composed of four CKMT2 homodimers.

The protein localises to the mitochondrion inner membrane. It catalyses the reaction creatine + ATP = N-phosphocreatine + ADP + H(+). Its function is as follows. Reversibly catalyzes the transfer of phosphate between ATP and various phosphogens (e.g. creatine phosphate). Creatine kinase isoenzymes play a central role in energy transduction in tissues with large, fluctuating energy demands, such as skeletal muscle, heart, brain and spermatozoa. The polypeptide is Creatine kinase S-type, mitochondrial (CKMT2) (Oryctolagus cuniculus (Rabbit)).